The following is a 209-amino-acid chain: Thiamine-phosphate synthase (209 aa).

Residues 36–40 and asparagine 68 each bind 4-amino-2-methyl-5-(diphosphooxymethyl)pyrimidine; that span reads QYRDK. Mg(2+) contacts are provided by aspartate 69 and aspartate 87. Residue threonine 106 participates in 4-amino-2-methyl-5-(diphosphooxymethyl)pyrimidine binding. 133–135 lines the 2-[(2R,5Z)-2-carboxy-4-methylthiazol-5(2H)-ylidene]ethyl phosphate pocket; the sequence is SST. Residue lysine 136 participates in 4-amino-2-methyl-5-(diphosphooxymethyl)pyrimidine binding. Glycine 163 lines the 2-[(2R,5Z)-2-carboxy-4-methylthiazol-5(2H)-ylidene]ethyl phosphate pocket.

It belongs to the thiamine-phosphate synthase family. The cofactor is Mg(2+).

The catalysed reaction is 2-[(2R,5Z)-2-carboxy-4-methylthiazol-5(2H)-ylidene]ethyl phosphate + 4-amino-2-methyl-5-(diphosphooxymethyl)pyrimidine + 2 H(+) = thiamine phosphate + CO2 + diphosphate. The enzyme catalyses 2-(2-carboxy-4-methylthiazol-5-yl)ethyl phosphate + 4-amino-2-methyl-5-(diphosphooxymethyl)pyrimidine + 2 H(+) = thiamine phosphate + CO2 + diphosphate. It carries out the reaction 4-methyl-5-(2-phosphooxyethyl)-thiazole + 4-amino-2-methyl-5-(diphosphooxymethyl)pyrimidine + H(+) = thiamine phosphate + diphosphate. It functions in the pathway cofactor biosynthesis; thiamine diphosphate biosynthesis; thiamine phosphate from 4-amino-2-methyl-5-diphosphomethylpyrimidine and 4-methyl-5-(2-phosphoethyl)-thiazole: step 1/1. In terms of biological role, condenses 4-methyl-5-(beta-hydroxyethyl)thiazole monophosphate (THZ-P) and 2-methyl-4-amino-5-hydroxymethyl pyrimidine pyrophosphate (HMP-PP) to form thiamine monophosphate (TMP). In Azotobacter vinelandii (strain DJ / ATCC BAA-1303), this protein is Thiamine-phosphate synthase.